Consider the following 255-residue polypeptide: 3-dehydroquinate dehydratase (255 aa).

Residues 47–49 and Arg-83 each bind 3-dehydroquinate; that span reads EWR. The active-site Proton donor/acceptor is His-145. Catalysis depends on Lys-172, which acts as the Schiff-base intermediate with substrate. Positions 215, 234, and 238 each coordinate 3-dehydroquinate.

The protein belongs to the type-I 3-dehydroquinase family. Homodimer.

It carries out the reaction 3-dehydroquinate = 3-dehydroshikimate + H2O. It functions in the pathway metabolic intermediate biosynthesis; chorismate biosynthesis; chorismate from D-erythrose 4-phosphate and phosphoenolpyruvate: step 3/7. Involved in the third step of the chorismate pathway, which leads to the biosynthesis of aromatic amino acids. Catalyzes the cis-dehydration of 3-dehydroquinate (DHQ) and introduces the first double bond of the aromatic ring to yield 3-dehydroshikimate. This Clostridium kluyveri (strain NBRC 12016) protein is 3-dehydroquinate dehydratase.